The chain runs to 146 residues: Probable acetyltransferase HI_0677 (146 aa).

The N-acetyltransferase domain occupies 1–146; the sequence is MKLFKAEQWN…ERLFELSLSC (146 aa).

This chain is Probable acetyltransferase HI_0677, found in Haemophilus influenzae (strain ATCC 51907 / DSM 11121 / KW20 / Rd).